Consider the following 312-residue polypeptide: MKAGNFSDTPEFFLLGLSGDPELQPILFMLFLSMYLATMLGNLLIILAVNSDSHLHTPMYFLLSILSLVDICFTSTTMPKMLVNIQAQAQSINYTGCLTQICFVLVFVGLENGILVMMAYDRFVAICHPLRYNVIMNPKLCGLLLLLSFIVSVLDALLHTLMVLQLTFCIDLEIPHFFCELAHILKLACSDVLINNILVYLVTSLLGVVPLSGIIFSYTRIVSSVMKIPSAGGKYKAFSICGSHLIVVSLFYGTGFGVYLSSGATHSSRKGAIASVMYTVVTPMLNPLIYSLRNKDMLKALRKLISRIPSFH.

Over 1 to 25 (MKAGNFSDTPEFFLLGLSGDPELQP) the chain is Extracellular. The N-linked (GlcNAc...) asparagine glycan is linked to Asn-5. The helical transmembrane segment at 26–46 (ILFMLFLSMYLATMLGNLLII) threads the bilayer. At 47-54 (LAVNSDSH) the chain is on the cytoplasmic side. Residues 55 to 75 (LHTPMYFLLSILSLVDICFTS) traverse the membrane as a helical segment. At 76–99 (TTMPKMLVNIQAQAQSINYTGCLT) the chain is on the extracellular side. Asn-93 carries an N-linked (GlcNAc...) asparagine glycan. A disulfide bridge links Cys-97 with Cys-189. Residues 100-120 (QICFVLVFVGLENGILVMMAY) traverse the membrane as a helical segment. The Cytoplasmic portion of the chain corresponds to 121–139 (DRFVAICHPLRYNVIMNPK). A helical membrane pass occupies residues 140 to 160 (LCGLLLLLSFIVSVLDALLHT). Residues 161 to 197 (LMVLQLTFCIDLEIPHFFCELAHILKLACSDVLINNI) lie on the Extracellular side of the membrane. The chain crosses the membrane as a helical span at residues 198-217 (LVYLVTSLLGVVPLSGIIFS). Residues 218 to 237 (YTRIVSSVMKIPSAGGKYKA) are Cytoplasmic-facing. The chain crosses the membrane as a helical span at residues 238–258 (FSICGSHLIVVSLFYGTGFGV). Topologically, residues 259–271 (YLSSGATHSSRKG) are extracellular. Residues 272–292 (AIASVMYTVVTPMLNPLIYSL) form a helical membrane-spanning segment. The Cytoplasmic portion of the chain corresponds to 293-312 (RNKDMLKALRKLISRIPSFH).

Belongs to the G-protein coupled receptor 1 family.

It is found in the cell membrane. In terms of biological role, odorant receptor. The sequence is that of Olfactory receptor 7G3 (OR7G3) from Homo sapiens (Human).